Here is a 329-residue protein sequence, read N- to C-terminus: Prostaglandin reductase 1 (329 aa).

Threonine 18 carries the post-translational modification Phosphothreonine. Phosphoserine is present on serine 20. NADP(+) is bound by residues 152-155, lysine 178, tyrosine 193, asparagine 217, 239-245, 270-272, and asparagine 321; these read GAVG, CGAISTY, and FIV. An N6-(2-hydroxyisobutyryl)lysine; alternate modification is found at lysine 178. At lysine 178 the chain carries N6-acetyllysine; alternate.

The protein belongs to the NADP-dependent oxidoreductase L4BD family. As to quaternary structure, monomer or homodimer. In terms of tissue distribution, ubiquitously distributed in various tissues and leukocytes, the kidney and liver had the highest enzyme activities.

The protein resides in the cytoplasm. It catalyses the reaction 13,14-dihydro-15-oxo-prostaglandin E1 + NADP(+) = 15-oxoprostaglandin E1 + NADPH + H(+). It carries out the reaction 13,14-dihydro-15-oxo-prostaglandin E2 + NADP(+) = 15-oxoprostaglandin E2 + NADPH + H(+). The enzyme catalyses 13,14-dihydro-15-oxo-prostaglandin E2 + NAD(+) = 15-oxoprostaglandin E2 + NADH + H(+). The catalysed reaction is 13,14-dihydro-15-oxo-prostaglandin F1alpha + NADP(+) = 15-oxoprostaglandin F1alpha + NADPH + H(+). It catalyses the reaction 13,14-dihydro-15-oxo-PGF2alpha + NADP(+) = 15-oxoprostaglandin F2alpha + NADPH + H(+). It carries out the reaction leukotriene B4 + NADP(+) = 12-oxo-leukotriene B4 + NADPH + H(+). The enzyme catalyses 20-hydroxy-leukotriene B4 + NADP(+) = 12-oxo-20-hydroxy-leukotriene B4 + NADPH + H(+). The catalysed reaction is 6-trans-leukotriene B4 + NADP(+) = 12-oxo-(5S)-hydroxy-(6E,8E,10E,14Z)-eicosatetraenoate + NADPH + H(+). It catalyses the reaction (5S,12S)-dihydroxy-(6E,10E,12E,14Z)-eicosatetraenoate + NADP(+) = 12-oxo-(5S)-hydroxy-(6E,8E,10E,14Z)-eicosatetraenoate + NADPH + H(+). It carries out the reaction 15-oxo-(5S,6R)-dihydroxy-(7E,9E,11Z,13E)-eicosatetraenoate + NADH + H(+) = 15-oxo-(5S,6R)-dihydroxy-(7E,9E,11Z)-eicosatrienoate + NAD(+). The enzyme catalyses an n-alkanal + NADP(+) = an alk-2-enal + NADPH + H(+). The catalysed reaction is hexanal + NADP(+) = (E)-hex-2-enal + NADPH + H(+). It catalyses the reaction octanal + NADP(+) = (2E)-octenal + NADPH + H(+). It carries out the reaction decanal + NADP(+) = (2E)-decenal + NADPH + H(+). The enzyme catalyses dodecanal + NADP(+) = (2E)-dodecenal + NADPH + H(+). The catalysed reaction is 4-hydroxynonanal + NADP(+) = (E)-4-hydroxynon-2-enal + NADPH + H(+). It catalyses the reaction pentan-2-one + NADP(+) = (E)-pent-3-en-2-one + NADPH + H(+). It carries out the reaction nonan-2-one + NADP(+) = (3E)-nonen-2-one + NADPH + H(+). Down-regulated by nonsteroidal anti-inflammatory drugs diclofenac, indomethacin and niflumic acid. NAD(P)H-dependent oxidoreductase involved in metabolic inactivation of pro- and anti-inflammatory eicosanoids: prostaglandins (PG), leukotrienes (LT) and lipoxins (LX). Preferentially uses NADPH over NADH as cofactor. Catalyzes with high efficiency the reduction of the 13,14 double bond of 15-oxoPGs, including 15-oxo-PGE1, 15-oxo-PGE2, 15-oxo-PGF1-alpha and 15-oxo-PGF2-alpha. Catalyzes with lower efficiency the oxidation of the hydroxyl group at C12 of LTB4 and its derivatives, converting them into biologically less active 12-oxo-LTB4 metabolites. Reduces 15-oxo-LXA4 to 13,14 dihydro-15-oxo-LXA4 and may promote neutrophil recruitment at the inflammatory site. Plays a role in metabolic detoxification of alkenals and ketones. Reduces alpha,beta-unsaturated alkenals and ketones, particularly those with medium-chain length, showing highest affinity toward (2E)-decenal and (3E)-3-nonen-2-one. May inactivate 4-hydroxy-2-nonenal, a cytotoxic lipid constituent of oxidized low-density lipoprotein particles. This Sus scrofa (Pig) protein is Prostaglandin reductase 1 (PTGR1).